The sequence spans 125 residues: Small ribosomal subunit protein uS12c (125 aa).

The protein belongs to the universal ribosomal protein uS12 family. In terms of assembly, part of the 30S ribosomal subunit.

Its subcellular location is the plastid. The protein resides in the chloroplast. Its function is as follows. With S4 and S5 plays an important role in translational accuracy. Located at the interface of the 30S and 50S subunits. The protein is Small ribosomal subunit protein uS12c (rps12) of Tupiella akineta (Green alga).